The primary structure comprises 210 residues: Thymidylate kinase (210 aa).

10-17 (GPEGAGKS) provides a ligand contact to ATP.

Belongs to the thymidylate kinase family.

The enzyme catalyses dTMP + ATP = dTDP + ADP. Phosphorylation of dTMP to form dTDP in both de novo and salvage pathways of dTTP synthesis. The sequence is that of Thymidylate kinase from Pseudomonas aeruginosa (strain LESB58).